The sequence spans 83 residues: MYB-like transcription factor ETC1 (83 aa).

Positions Ala35–Trp72 constitute a Myb-like domain.

Expressed in developing trichomes and non-root hair cells.

It is found in the nucleus. In terms of biological role, MYB-type transcription factor involved in epidermal cell fate specification. Acts as a negative regulator of trichome development, by mediating lateral inhibition. Promotes the formation of hair developing cells in H position in root epidermis, probably by inhibiting non-hair cell formation. The protein is MYB-like transcription factor ETC1 (ETC1) of Arabidopsis thaliana (Mouse-ear cress).